The primary structure comprises 185 residues: Elongation factor P (185 aa).

Belongs to the elongation factor P family.

Its subcellular location is the cytoplasm. Its pathway is protein biosynthesis; polypeptide chain elongation. In terms of biological role, involved in peptide bond synthesis. Stimulates efficient translation and peptide-bond synthesis on native or reconstituted 70S ribosomes in vitro. Probably functions indirectly by altering the affinity of the ribosome for aminoacyl-tRNA, thus increasing their reactivity as acceptors for peptidyl transferase. In Symbiobacterium thermophilum (strain DSM 24528 / JCM 14929 / IAM 14863 / T), this protein is Elongation factor P.